The chain runs to 113 residues: Large ribosomal subunit protein uL22 (113 aa).

It belongs to the universal ribosomal protein uL22 family. In terms of assembly, part of the 50S ribosomal subunit.

Its function is as follows. This protein binds specifically to 23S rRNA; its binding is stimulated by other ribosomal proteins, e.g. L4, L17, and L20. It is important during the early stages of 50S assembly. It makes multiple contacts with different domains of the 23S rRNA in the assembled 50S subunit and ribosome. Functionally, the globular domain of the protein is located near the polypeptide exit tunnel on the outside of the subunit, while an extended beta-hairpin is found that lines the wall of the exit tunnel in the center of the 70S ribosome. This chain is Large ribosomal subunit protein uL22, found in Geobacillus kaustophilus (strain HTA426).